Reading from the N-terminus, the 354-residue chain is UDP-glucose 4-epimerase GEPI42 (354 aa).

11–42 (TILVTGGAGFIGSHTVVQLLKQGFHVSIIDNL) is a binding site for NAD(+). Ser-137 contacts substrate. Residue Tyr-161 is the Proton acceptor of the active site.

Belongs to the NAD(P)-dependent epimerase/dehydratase family. NAD(+) serves as cofactor.

The catalysed reaction is UDP-alpha-D-glucose = UDP-alpha-D-galactose. It participates in carbohydrate metabolism; galactose metabolism. This chain is UDP-glucose 4-epimerase GEPI42, found in Cyamopsis tetragonoloba (Guar).